The following is a 598-amino-acid chain: Elongation factor 4 (598 aa).

Residues 4–186 enclose the tr-type G domain; it reads INIRNFAIIA…AIVSRLPAPS (183 aa). GTP is bound by residues 16–21 and 133–136; these read DHGKST and NKID.

This sequence belongs to the TRAFAC class translation factor GTPase superfamily. Classic translation factor GTPase family. LepA subfamily.

The protein localises to the cell inner membrane. The catalysed reaction is GTP + H2O = GDP + phosphate + H(+). Required for accurate and efficient protein synthesis under certain stress conditions. May act as a fidelity factor of the translation reaction, by catalyzing a one-codon backward translocation of tRNAs on improperly translocated ribosomes. Back-translocation proceeds from a post-translocation (POST) complex to a pre-translocation (PRE) complex, thus giving elongation factor G a second chance to translocate the tRNAs correctly. Binds to ribosomes in a GTP-dependent manner. The chain is Elongation factor 4 from Ehrlichia ruminantium (strain Gardel).